A 586-amino-acid polypeptide reads, in one-letter code: MFS-type transporter ucsD (586 aa).

Residues 1–56 are disordered; it reads MSRNSGTTLEDGPLHADPTTEAPNNATVTTNVTANDENTEKEVDADAAAAAPAEAP. Low complexity-rich tracts occupy residues 19 to 36 and 46 to 56; these read TTEAPNNATVTTNVTAND and DAAAAAPAEAP. N-linked (GlcNAc...) asparagine glycosylation is found at asparagine 25 and asparagine 31. A run of 8 helical transmembrane segments spans residues 65 to 85, 101 to 121, 131 to 151, 164 to 184, 192 to 212, 220 to 240, 263 to 283, and 290 to 310; these read WAIVAALAFTALLSSLEGTII, SFIWVPNGYFLATIVMLPLMA, WLTLISVATFTLGSGICGGAN, GFGGGGIALMINIILTDLVPL, GIVQMVSAVGAALGPFLGGLL, WVFYINLPIGGTSLVALFFFL, AIFIASTVSVLIGVTWGGAVY, and VIVPLVLGFFGLGLFVVYEWT. The N-linked (GlcNAc...) asparagine glycan is linked to asparagine 324. 6 consecutive transmembrane segments (helical) span residues 330 to 350, 368 to 388, 393 to 413, 420 to 440, 458 to 478, and 532 to 552; these read VLGVTFLHTVATYWSFYFMPI, LPLFAGIFPFAILGGMLLAKF, PMHLIGMAIITLSFGLFSLLD, AWACFQLLFAVGAGLMIAILL, VWTFVRGFGTVWGVTIPSAIF, and LRTVWYVGVALAGFGWLLIWL.

Belongs to the major facilitator superfamily.

The protein resides in the membrane. Functionally, MFS-type transporter; part of the gene cluster that mediates the biosynthesis of UCS1025A, a member of the pyrrolizidinone family that acts as a strong telomerase inhibitor and displays potent antibacterial and antitumor properties. These compounds share a hemiaminal-containing pyrrolizidinone core fused with a gamma-lactone, giving a furopyrrolizidine that is connected to a decalin fragment. This is MFS-type transporter ucsD from Acremonium sp.